The primary structure comprises 214 residues: Probable nicotinate-nucleotide adenylyltransferase (214 aa).

Belongs to the NadD family.

It carries out the reaction nicotinate beta-D-ribonucleotide + ATP + H(+) = deamido-NAD(+) + diphosphate. It functions in the pathway cofactor biosynthesis; NAD(+) biosynthesis; deamido-NAD(+) from nicotinate D-ribonucleotide: step 1/1. Catalyzes the reversible adenylation of nicotinate mononucleotide (NaMN) to nicotinic acid adenine dinucleotide (NaAD). The chain is Probable nicotinate-nucleotide adenylyltransferase from Pseudomonas fluorescens (strain ATCC BAA-477 / NRRL B-23932 / Pf-5).